Here is a 442-residue protein sequence, read N- to C-terminus: Protein PRRC1-B (442 aa).

A disordered region spans residues 1-24; sequence MMEESGIETTPPSTPPPSTIGTSV.

It belongs to the PRRC1 family.

Its subcellular location is the golgi apparatus. This is Protein PRRC1-B (prrc1-b) from Xenopus laevis (African clawed frog).